The sequence spans 314 residues: Zinc transporter ZIP3 (314 aa).

The Extracellular portion of the chain corresponds to 1 to 3; sequence MVK. The chain crosses the membrane as a helical span at residues 4–24; sequence LLVAKILCMVGVFFFMLLGSL. At 25–42 the chain is on the cytoplasmic side; sequence LPVKIIETDFEKAHRSKK. Residues 43–63 form a helical membrane-spanning segment; that stretch reads ILSLCNTFGGGVFLATCFNAL. Topologically, residues 64–85 are extracellular; that stretch reads LPAVREKLQKVLSLGHISTDYP. Residues 86 to 106 traverse the membrane as a helical segment; the sequence is LAETILLLGFFMTVFLEQLIL. Topologically, residues 107-169 are cytoplasmic; that stretch reads TFRKEKPSFI…QGLSRASPVR (63 aa). Residues Ser-125 and Ser-129 each carry the phosphoserine modification. A helical transmembrane segment spans residues 170-190; it reads LLSLAFALSAHSVFEGLALGL. At 191–196 the chain is on the extracellular side; that stretch reads QEEGEK. The helical transmembrane segment at 197 to 217 threads the bilayer; it reads VVSLFVGVAVHETLVAVALGI. The Cytoplasmic segment spans residues 218-229; the sequence is SMARSAMPLRDA. A helical transmembrane segment spans residues 230–250; the sequence is AKLAVTVSAMIPLGIGLGLGI. The Extracellular portion of the chain corresponds to 251–262; that stretch reads ESAQGVPGSVAS. The helical transmembrane segment at 263-283 threads the bilayer; sequence VLLQGLAGGTFLFITFLEILA. At 284 to 292 the chain is on the cytoplasmic side; it reads KELEEKSDR. The chain crosses the membrane as a helical span at residues 293-313; it reads LLKVLFLVLGYTVLAGMVFLK. Trp-314 is a topological domain (extracellular).

This sequence belongs to the ZIP transporter (TC 2.A.5) family.

It is found in the cell membrane. The protein resides in the apical cell membrane. The catalysed reaction is Zn(2+)(in) = Zn(2+)(out). Transporter for the divalent cation Zn(2+). Mediates the influx of Zn(2+) into cells from extracellular space. Controls Zn(2+) accumulation into dentate gyrus granule cells in the hippocampus. Mediates Zn(2+) reuptake from the secreted milk within the alveolar lumen. This is Zinc transporter ZIP3 from Homo sapiens (Human).